The chain runs to 289 residues: Ribosomal RNA small subunit methyltransferase A (289 aa).

S-adenosyl-L-methionine contacts are provided by N28, L30, G55, E76, D101, and N125.

This sequence belongs to the class I-like SAM-binding methyltransferase superfamily. rRNA adenine N(6)-methyltransferase family. RsmA subfamily.

Its subcellular location is the cytoplasm. It carries out the reaction adenosine(1518)/adenosine(1519) in 16S rRNA + 4 S-adenosyl-L-methionine = N(6)-dimethyladenosine(1518)/N(6)-dimethyladenosine(1519) in 16S rRNA + 4 S-adenosyl-L-homocysteine + 4 H(+). In terms of biological role, specifically dimethylates two adjacent adenosines (A1518 and A1519) in the loop of a conserved hairpin near the 3'-end of 16S rRNA in the 30S particle. May play a critical role in biogenesis of 30S subunits. The sequence is that of Ribosomal RNA small subunit methyltransferase A from Clostridioides difficile (strain 630) (Peptoclostridium difficile).